A 587-amino-acid polypeptide reads, in one-letter code: MMNPHVQENLQAIHNALSNFDTSFLSEDEEDYCPLCIEPMDITDKNFFPCPCGYQICQFCYNNIRQNPELNGRCPACRRKYDDENVRYVTLSPEELKMERAKLARKEKERKHREKERKENEYTNRKHLSGTRVIQKNLVYVVGINPPVPYEEVAPTLKSEKYFGQYGKINKIVVNRKTPHSNNTTSEHYHHHSPGYGVYITFGSKDDAARCIAQVDGTYMDGRLIKAAYGTTKYCSSYLRGLPCPNPNCMFLHEPGEEADSFNKRELHNKQQAQQQSGGTAFTRSGIHNNISTSTAGSNTNLLSENFTGTPSPAAMRAQLHHDSHTNAGTPVLTPAPVPAGSNPWGVTQSATPVTSINLSKNSSSINLPTLNDSLGHHTTPTTENTITSTTTTTNTNATSHSHGSKKKQSLAAEEYKDPYDALGNAVDFLDARLHSLSNYQKRPISIKSNIIDEETYKKYPSLFSWDKIEASKKSDNTLANKLVEILAIKPIDYTASVVQFLQSVNVGVNDNITITDNTKTPTQPIRLQTVSQQIQPPLNVSTPPPGIFGPQHKVPIQQQQMGDTSSRNSSDLLNQLINGRKIIAGN.

The RING-type zinc finger occupies 33 to 78; sequence CPLCIEPMDITDKNFFPCPCGYQICQFCYNNIRQNPELNGRCPACR. A coiled-coil region spans residues 94-128; the sequence is EELKMERAKLARKEKERKHREKERKENEYTNRKHL. In terms of domain architecture, RRM spans 137–228; that stretch reads NLVYVVGINP…YMDGRLIKAA (92 aa). The segment at 229-256 adopts a C3H1-type zinc-finger fold; that stretch reads YGTTKYCSSYLRGLPCPNPNCMFLHEPG. Lysine 270 is covalently cross-linked (Glycyl lysine isopeptide (Lys-Gly) (interchain with G-Cter in ubiquitin)). Phosphothreonine is present on threonine 310. Position 312 is a phosphoserine (serine 312). Phosphothreonine is present on threonine 326. A Phosphoserine modification is found at serine 360. Positions 370–412 are disordered; it reads TLNDSLGHHTTPTTENTITSTTTTTNTNATSHSHGSKKKQSLA. Positions 377 to 402 are enriched in low complexity; that stretch reads HHTTPTTENTITSTTTTTNTNATSHS.

Forms a NOT protein complex that comprises NOT1, NOT2, NOT3, NOT4 and NOT5. Subunit of the 1.0 MDa CCR4-NOT core complex that contains CCR4, CAF1, NOT1, NOT2, NOT3, NOT4, NOT5, CAF40 and CAF130. In the complex interacts with NOT1. The core complex probably is part of a less characterized 1.9 MDa CCR4-NOT complex.

It is found in the cytoplasm. It localises to the nucleus. The enzyme catalyses S-ubiquitinyl-[E2 ubiquitin-conjugating enzyme]-L-cysteine + [acceptor protein]-L-lysine = [E2 ubiquitin-conjugating enzyme]-L-cysteine + N(6)-ubiquitinyl-[acceptor protein]-L-lysine.. The protein operates within protein modification; protein ubiquitination. Functionally, E3 ubiquitin-protein ligase component of the CCR4-NOT core complex, which in the nucleus seems to be a general transcription factor, and in the cytoplasm the major mRNA deadenylase involved in mRNA turnover. The NOT protein subcomplex negatively regulates the basal and activated transcription of many genes. Preferentially affects TC-type TATA element-dependent transcription. Could directly or indirectly inhibit component(s) of the general transcription machinery. In the cytoplasm, catalyzes monoubiquitination of RPS7/es7 in response to stalled ribosomes, initiating a HEL2-dependent response that activates the No-Go Decay (NGD) pathway. This Saccharomyces cerevisiae (strain ATCC 204508 / S288c) (Baker's yeast) protein is General negative regulator of transcription subunit 4 (MOT2).